Reading from the N-terminus, the 318-residue chain is Olfactory receptor 13C9 (318 aa).

Topologically, residues 1–25 are extracellular; it reads MEWENQTILVEFFLKGHSVHPRLEL. The N-linked (GlcNAc...) asparagine glycan is linked to asparagine 5. Residues 26 to 46 traverse the membrane as a helical segment; the sequence is LFFVLIFIMYVVILLGNGTLI. Topologically, residues 47–54 are cytoplasmic; that stretch reads LISILDPH. A helical transmembrane segment spans residues 55–75; the sequence is LHTPMYFFLGNLSFLDICYTT. Over 76-99 the chain is Extracellular; sequence TSIPSTLVSFLSERKTISFSGCAV. A disulfide bridge links cysteine 97 with cysteine 189. The helical transmembrane segment at 100–120 threads the bilayer; the sequence is QMFLGLAMGTTECVLLGMMAF. Over 121–139 the chain is Cytoplasmic; the sequence is DRYVAICNPLRYPIIMSKN. Residues 140–160 form a helical membrane-spanning segment; that stretch reads AYVPMAVGSWFAGIVNSAVQT. Topologically, residues 161-197 are extracellular; the sequence is TFVVQLPFCRKNVINHFSCEILAVMKLACADISGNEF. The chain crosses the membrane as a helical span at residues 198-217; it reads LMLVATILFTLMPLLLIVIS. Topologically, residues 218-237 are cytoplasmic; it reads YSLIISSILKIHSSEGRSKA. Residues 238–258 traverse the membrane as a helical segment; the sequence is FSTCSAHLTVVIIFYGTILFM. The Extracellular segment spans residues 259 to 277; sequence YMKPKSKETLNSDDLDATD. The helical transmembrane segment at 278–298 threads the bilayer; sequence KIISMFYGVMTPMMNPLIYSL. The Cytoplasmic portion of the chain corresponds to 299-318; that stretch reads RNKDVKEAVKHLPNRRFFSK.

It belongs to the G-protein coupled receptor 1 family.

Its subcellular location is the cell membrane. Its function is as follows. Odorant receptor. The chain is Olfactory receptor 13C9 (OR13C9) from Homo sapiens (Human).